The following is a 198-amino-acid chain: Recombination protein RecR (198 aa).

Residues 57–72 (CSVCGHITDRDPCYIC) form a C4-type zinc finger. The Toprim domain occupies 80–175 (SVVCVVQEPK…KVTRIAHGLP (96 aa)).

It belongs to the RecR family.

In terms of biological role, may play a role in DNA repair. It seems to be involved in an RecBC-independent recombinational process of DNA repair. It may act with RecF and RecO. The protein is Recombination protein RecR of Bacillus mycoides (strain KBAB4) (Bacillus weihenstephanensis).